The following is a 653-amino-acid chain: MPENKNDKENKNDKENKNTKEEKKKVKFSNIIWVYIIFAVFFIGALISLNWENNPIISYSEMLSLINDGQVESMKINQNGNVEILSKDGTTYESFSPALVIDKQYVNSLIQKGIKVEYVESVGTKWWFGLLINIIPIVVMVLFFFWLYRSASAGARSSMNFGKSGAKKYEPIGEKVTFKDVAGIDEVLDEIEDIVKFLKNPQEFQELGARMPKGTLLVGPPGTGKTLTARAIAGEADVPFYYASGSDFVELFVGVGASRVRDLFKTAKENAPAIIFIDELDAVGRQRGAGLGGGNDEREQTLNALLVELDGFDTSTGVVVMAATNRPDVLDKALLRPGRFDKKIMVGPPDVKGREEILKIHTRKKKIAPDVDLKLLAKRTPGFVGADLENLVNEAALIASRKKKNQVEMSDFEEAIDRVLTGPSKKYRIISDKEKKILSYHELGHAVLAYLLPNTDPVYKITIIPRGAGSLGSTLQIPEKDKYLIKKSEILDRIVVALGGRASEKLVFNFATTGAKDDLRKATDYAKSMIYRLGMSKRMGPVYWEGEEEEIFLGSELTKQRNYSEETAKELDVEVKKIINSMYDKALELLKQNRERLDLLASYIFKNETIYGEEFKKLMSKDLEELKEYIGGEKEINEFLKIDVVNHVNYQPV.

The tract at residues 1–20 (MPENKNDKENKNDKENKNTK) is disordered. At 1–30 (MPENKNDKENKNDKENKNTKEEKKKVKFSN) the chain is on the cytoplasmic side. The chain crosses the membrane as a helical span at residues 31–51 (IIWVYIIFAVFFIGALISLNW). The Periplasmic portion of the chain corresponds to 52–126 (ENNPIISYSE…EYVESVGTKW (75 aa)). A helical membrane pass occupies residues 127–147 (WFGLLINIIPIVVMVLFFFWL). Residues 148–653 (YRSASAGARS…VVNHVNYQPV (506 aa)) are Cytoplasmic-facing. 219-226 (GPPGTGKT) lines the ATP pocket. His441 is a binding site for Zn(2+). Residue Glu442 is part of the active site. The Zn(2+) site is built by His445 and Asp518.

In the central section; belongs to the AAA ATPase family. The protein in the C-terminal section; belongs to the peptidase M41 family. In terms of assembly, homohexamer. Zn(2+) is required as a cofactor.

It localises to the cell inner membrane. Functionally, acts as a processive, ATP-dependent zinc metallopeptidase for both cytoplasmic and membrane proteins. Plays a role in the quality control of integral membrane proteins. The polypeptide is ATP-dependent zinc metalloprotease FtsH 1 (Petrotoga mobilis (strain DSM 10674 / SJ95)).